Consider the following 292-residue polypeptide: Small ribosomal subunit protein uS2 (292 aa).

Positions 230-292 (RSGGAPGSEK…KKEAGSGEEA (63 aa)) are disordered. Basic and acidic residues-rich tracts occupy residues 247 to 259 (EWER…KTEA) and 271 to 292 (PAKE…GEEA).

The protein belongs to the universal ribosomal protein uS2 family.

This is Small ribosomal subunit protein uS2 from Thermobifida fusca (strain YX).